The following is a 361-amino-acid chain: tRNA/tmRNA (uracil-C(5))-methyltransferase (361 aa).

The S-adenosyl-L-methionine site is built by glutamine 185, tyrosine 213, asparagine 218, glutamate 234, and aspartate 294. The active-site Nucleophile is cysteine 319. The active-site Proton acceptor is glutamate 353.

The protein belongs to the class I-like SAM-binding methyltransferase superfamily. RNA M5U methyltransferase family. TrmA subfamily.

The enzyme catalyses uridine(54) in tRNA + S-adenosyl-L-methionine = 5-methyluridine(54) in tRNA + S-adenosyl-L-homocysteine + H(+). The catalysed reaction is uridine(341) in tmRNA + S-adenosyl-L-methionine = 5-methyluridine(341) in tmRNA + S-adenosyl-L-homocysteine + H(+). Dual-specificity methyltransferase that catalyzes the formation of 5-methyluridine at position 54 (m5U54) in all tRNAs, and that of position 341 (m5U341) in tmRNA (transfer-mRNA). In Pseudomonas savastanoi pv. phaseolicola (strain 1448A / Race 6) (Pseudomonas syringae pv. phaseolicola (strain 1448A / Race 6)), this protein is tRNA/tmRNA (uracil-C(5))-methyltransferase.